The following is a 231-amino-acid chain: 2-C-methyl-D-erythritol 4-phosphate cytidylyltransferase (231 aa).

Belongs to the IspD/TarI cytidylyltransferase family. IspD subfamily.

It catalyses the reaction 2-C-methyl-D-erythritol 4-phosphate + CTP + H(+) = 4-CDP-2-C-methyl-D-erythritol + diphosphate. The protein operates within isoprenoid biosynthesis; isopentenyl diphosphate biosynthesis via DXP pathway; isopentenyl diphosphate from 1-deoxy-D-xylulose 5-phosphate: step 2/6. Functionally, catalyzes the formation of 4-diphosphocytidyl-2-C-methyl-D-erythritol from CTP and 2-C-methyl-D-erythritol 4-phosphate (MEP). The sequence is that of 2-C-methyl-D-erythritol 4-phosphate cytidylyltransferase from Dictyoglomus thermophilum (strain ATCC 35947 / DSM 3960 / H-6-12).